Here is a 121-residue protein sequence, read N- to C-terminus: Large-conductance mechanosensitive channel (121 aa).

A run of 2 helical transmembrane segments spans residues 14–34 (VLDL…VKSL) and 67–87 (GAFL…FVLI).

Belongs to the MscL family. Homopentamer.

It localises to the cell membrane. Its function is as follows. Channel that opens in response to stretch forces in the membrane lipid bilayer. May participate in the regulation of osmotic pressure changes within the cell. The chain is Large-conductance mechanosensitive channel from Lactococcus lactis subsp. cremoris (strain SK11).